The chain runs to 82 residues: P2Y purinoceptor 2 (82 aa).

Residues 1–25 (LPLSYGVVCVLGLCLNVVALYIFLC) form a helical membrane-spanning segment. Residues 26–35 (RLKTWNASTT) are Cytoplasmic-facing. Residues 36–56 (YMFHLAVSDSLYAASLPLLVY) form a helical membrane-spanning segment. Residues 57–75 (YYAQGDHWPFSTVLCKLVR) are Extracellular-facing. Residues 76–82 (FLFYTNL) traverse the membrane as a helical segment.

The protein belongs to the G-protein coupled receptor 1 family. In terms of tissue distribution, expressed in brain, heart, stria vascularis and vestibular labyrinth.

It is found in the cell membrane. In terms of biological role, receptor for ATP and UTP coupled to G-proteins that activate a phosphatidylinositol-calcium second messenger system. Not activated by UDP. In Meriones unguiculatus (Mongolian jird), this protein is P2Y purinoceptor 2 (P2RY2).